A 644-amino-acid polypeptide reads, in one-letter code: Exoribonuclease 2 (644 aa).

The RNB domain occupies Arg-189–Thr-516. Residues Asp-561 to Val-643 form the S1 motif domain.

The protein belongs to the RNR ribonuclease family. RNase II subfamily.

The protein localises to the cytoplasm. The enzyme catalyses Exonucleolytic cleavage in the 3'- to 5'-direction to yield nucleoside 5'-phosphates.. Functionally, involved in mRNA degradation. Hydrolyzes single-stranded polyribonucleotides processively in the 3' to 5' direction. In Yersinia pseudotuberculosis serotype IB (strain PB1/+), this protein is Exoribonuclease 2.